A 753-amino-acid polypeptide reads, in one-letter code: 5-methyltetrahydropteroyltriglutamate--homocysteine methyltransferase (753 aa).

Residues 17–20 and lysine 117 contribute to the 5-methyltetrahydropteroyltri-L-glutamate site; that span reads RELK. Residues 431–433 and glutamate 484 contribute to the L-homocysteine site; that span reads IGS. L-methionine-binding positions include 431 to 433 and glutamate 484; that span reads IGS. Residues 515-516 and tryptophan 561 contribute to the 5-methyltetrahydropteroyltri-L-glutamate site; that span reads RC. L-homocysteine is bound at residue aspartate 599. Aspartate 599 contributes to the L-methionine binding site. Glutamate 605 is a binding site for 5-methyltetrahydropteroyltri-L-glutamate. Residues histidine 641, cysteine 643, and glutamate 665 each contribute to the Zn(2+) site. Histidine 694 functions as the Proton donor in the catalytic mechanism. Position 726 (cysteine 726) interacts with Zn(2+).

Belongs to the vitamin-B12 independent methionine synthase family. Zn(2+) is required as a cofactor.

The enzyme catalyses 5-methyltetrahydropteroyltri-L-glutamate + L-homocysteine = tetrahydropteroyltri-L-glutamate + L-methionine. It functions in the pathway amino-acid biosynthesis; L-methionine biosynthesis via de novo pathway; L-methionine from L-homocysteine (MetE route): step 1/1. Catalyzes the transfer of a methyl group from 5-methyltetrahydrofolate to homocysteine resulting in methionine formation. The sequence is that of 5-methyltetrahydropteroyltriglutamate--homocysteine methyltransferase from Shigella dysenteriae serotype 1 (strain Sd197).